The sequence spans 56 residues: Large ribosomal subunit protein eL40 (56 aa).

It belongs to the eukaryotic ribosomal protein eL40 family.

The polypeptide is Large ribosomal subunit protein eL40 (Metallosphaera sedula (strain ATCC 51363 / DSM 5348 / JCM 9185 / NBRC 15509 / TH2)).